The following is an 82-amino-acid chain: Sec-independent protein translocase protein TatA (82 aa).

The chain crosses the membrane as a helical span at residues 1-21 (MGSFSIWHWLIVLLVVVMIFG). The disordered stretch occupies residues 39–82 (FKDGMKDGSTTDAPAASSAPAAQVTGQPANSDKSTIDVEARQKS). The span at 51–60 (APAASSAPAA) shows a compositional bias: low complexity. A compositionally biased stretch (polar residues) spans 62 to 71 (VTGQPANSDK). Residues 72–82 (STIDVEARQKS) show a composition bias toward basic and acidic residues.

The protein belongs to the TatA/E family. In terms of assembly, the Tat system comprises two distinct complexes: a TatABC complex, containing multiple copies of TatA, TatB and TatC subunits, and a separate TatA complex, containing only TatA subunits. Substrates initially bind to the TatABC complex, which probably triggers association of the separate TatA complex to form the active translocon.

The protein resides in the cell inner membrane. In terms of biological role, part of the twin-arginine translocation (Tat) system that transports large folded proteins containing a characteristic twin-arginine motif in their signal peptide across membranes. TatA could form the protein-conducting channel of the Tat system. The chain is Sec-independent protein translocase protein TatA from Variovorax paradoxus (strain S110).